A 438-amino-acid chain; its full sequence is Shikimate transporter (438 aa).

12 helical membrane-spanning segments follow: residues 28–48 (FAGAVVDWYDFLLYGITAALV), 64–84 (LAAFATFGVGFLFRPLGGVIF), 109–129 (ALIGILPSFSTIGWWAPILLV), 133–153 (AIQGFAVGGEWGGAALLSVES), 168–188 (VGYGVGLLLSTGLVSLISMMT), 193–213 (FLSWGWRIPFLFSIVLVLGAL), 255–275 (IIALRLCELLTMYIVTAFALN), 287–307 (LFLNIGLLVGGLSCLTIPCFA), 318–337 (VYITGTLIGTLSAFPFFMAL), 341–363 (SIFWIVFFSIMLANIAHDMVVCV), 387–407 (VASVVGGGFTPFIAAALITYF), and 411–431 (WHSVAIYLLAGCLISAMTALL).

This sequence belongs to the major facilitator superfamily. Metabolite:H+ Symporter (MHS) family (TC 2.A.1.6) family.

The protein resides in the cell inner membrane. The catalysed reaction is shikimate(in) + H(+)(in) = shikimate(out) + H(+)(out). In terms of biological role, involved in the uptake of shikimate, an intermediate in the aromatic amino acid biosynthetic pathway. The chain is Shikimate transporter from Escherichia coli (strain K12).